Here is a 930-residue protein sequence, read N- to C-terminus: Translation initiation factor IF-2 (930 aa).

Over residues 50 to 67 the composition is skewed to low complexity; it reads FKPAAAPKVEAKPAAPKV. 2 disordered regions span residues 50–217 and 260–346; these read FKPA…SSEE and EVVP…HELP. Basic and acidic residues-rich tracts occupy residues 68–90 and 110–125; these read SAEKKAEKSEPAKPAVAKEEAKP and FKAEREARAKEQAERR. Residues 129–141 are compositionally biased toward low complexity; the sequence is KGNNRDQQQNGNR. Composition is skewed to basic and acidic residues over residues 157–167 and 262–295; these read RDNRRFNDQAK and VPEKKEPAVDTRRKKQARPDKNRDDYDHEEDGPR. The segment covering 309 to 318 has biased composition (low complexity); it reads NQKNSNWNNN. Positions 337–346 are enriched in basic and acidic residues; that stretch reads VTERKFHELP. The tr-type G domain occupies 432-599; the sequence is ERPPVVTIMG…TVLLVAEIQE (168 aa). Residues 441–448 are G1; sequence GHVDHGKT. 441–448 is a GTP binding site; sequence GHVDHGKT. The segment at 466–470 is G2; the sequence is GITQH. The segment at 487–490 is G3; it reads DTPG. GTP-binding positions include 487 to 491 and 541 to 544; these read DTPGH and NKID. Residues 541–544 are G4; sequence NKID. Positions 577-579 are G5; it reads SAK.

The protein belongs to the TRAFAC class translation factor GTPase superfamily. Classic translation factor GTPase family. IF-2 subfamily.

It is found in the cytoplasm. In terms of biological role, one of the essential components for the initiation of protein synthesis. Protects formylmethionyl-tRNA from spontaneous hydrolysis and promotes its binding to the 30S ribosomal subunits. Also involved in the hydrolysis of GTP during the formation of the 70S ribosomal complex. The sequence is that of Translation initiation factor IF-2 from Streptococcus pneumoniae (strain CGSP14).